The sequence spans 376 residues: Drebrin-like protein B (376 aa).

The ADF-H domain maps to 2–133; it reads SVNLSKNGAA…EPESIMEKVA (132 aa). A coiled-coil region spans residues 175-231; that stretch reads KENFWAKAEKDEEERRIEEHRRANVEKDRLERERKEREQREAEERERRFRERSKEID. A compositionally biased stretch (basic and acidic residues) spans 202–242; sequence DRLERERKEREQREAEERERRFRERSKEIDGHRKQQEEVEK. The tract at residues 202-288 is disordered; it reads DRLERERKER…FTASQQEEEN (87 aa). The segment covering 268 to 283 has biased composition (polar residues); it reads ESGSVSAQPEQFTASQ. The SH3 domain occupies 317 to 376; the sequence is DSGMCARALYDYQAADDTEISFDPDDVIIQIEMIDDGWWRGVAPSGHFGMFPANYVELLE.

Belongs to the ABP1 family.

It is found in the cytoplasm. Its subcellular location is the cytoskeleton. It localises to the cell projection. The protein localises to the lamellipodium. The protein resides in the ruffle. It is found in the cell cortex. Its subcellular location is the cytosol. It localises to the synapse. The protein localises to the perikaryon. The protein resides in the neuron projection. It is found in the cell membrane. Its subcellular location is the cytoplasmic vesicle. It localises to the clathrin-coated vesicle membrane. The protein localises to the golgi apparatus membrane. The protein resides in the podosome. It is found in the early endosome. Its subcellular location is the dendrite. It localises to the postsynaptic density. In terms of biological role, adapter protein that binds F-actin and dynamin, and thereby plays a role in receptor-mediated endocytosis. Plays a role in the reorganization of the actin cytoskeleton, formation of cell projections, such as neurites, in neuron morphogenesis and synapse formation. Does not bind G-actin and promote actin polymerization by itself, but excerts its functions by interaction with other proteins. Required for the formation of organized podosome rosettes. The chain is Drebrin-like protein B (dbnl-b) from Xenopus laevis (African clawed frog).